Reading from the N-terminus, the 152-residue chain is Endoribonuclease YbeY (152 aa).

Histidine 118, histidine 122, and histidine 128 together coordinate Zn(2+).

The protein belongs to the endoribonuclease YbeY family. Zn(2+) is required as a cofactor.

It localises to the cytoplasm. Single strand-specific metallo-endoribonuclease involved in late-stage 70S ribosome quality control and in maturation of the 3' terminus of the 16S rRNA. The polypeptide is Endoribonuclease YbeY (Lacticaseibacillus paracasei (strain ATCC 334 / BCRC 17002 / CCUG 31169 / CIP 107868 / KCTC 3260 / NRRL B-441) (Lactobacillus paracasei)).